Reading from the N-terminus, the 466-residue chain is Citrate synthase, mitochondrial (466 aa).

The N-terminal 27 residues, Met-1–Ser-27, are a transit peptide targeting the mitochondrion. Residues Ala-2–Leu-21 carry the SIFI-degron motif. Lys-57 is subject to N6-succinyllysine. The residue at position 76 (Lys-76) is an N6-acetyllysine; alternate. N6-succinyllysine; alternate is present on Lys-76. Lys-103 and Lys-193 each carry N6-succinyllysine. Residue His-301 is part of the active site. Lys-321 and Lys-327 each carry N6-acetyllysine; alternate. Residues Lys-321 and Lys-327 each carry the N6-succinyllysine; alternate modification. His-347 is a catalytic residue. Arg-356 contacts oxaloacetate. Position 375 is an N6-acetyllysine; alternate (Lys-375). Lys-375 is subject to N6-succinyllysine; alternate. Lys-382 is modified (N6-acetyllysine). Lys-393 carries the post-translational modification N6-acetyllysine; alternate. Lys-393 is subject to N6-succinyllysine; alternate. Lys-395 is modified (N6,N6,N6-trimethyllysine). Asp-402 is an active-site residue. 2 residues coordinate oxaloacetate: Arg-428 and Arg-448. Lys-450 bears the N6-succinyllysine mark. Lys-459 carries the N6-acetyllysine; alternate modification. N6-succinyllysine; alternate is present on Lys-459.

This sequence belongs to the citrate synthase family. Homodimer. Post-translationally, methylated. Trimethylation at Lys-395 by CSKMT decreases citrate synthase activity. In response to mitochondrial stress, the precursor protein is ubiquitinated by the SIFI complex in the cytoplasm before mitochondrial import, leading to its degradation. Within the SIFI complex, UBR4 initiates ubiquitin chain that are further elongated or branched by KCMF1.

It localises to the mitochondrion matrix. The enzyme catalyses oxaloacetate + acetyl-CoA + H2O = citrate + CoA + H(+). It participates in carbohydrate metabolism; tricarboxylic acid cycle; isocitrate from oxaloacetate: step 1/2. Its function is as follows. Key enzyme of the Krebs tricarboxylic acid cycle which catalyzes the synthesis of citrate from acetyl coenzyme A and oxaloacetate. The polypeptide is Citrate synthase, mitochondrial (CS) (Macaca fascicularis (Crab-eating macaque)).